We begin with the raw amino-acid sequence, 499 residues long: Cytochrome P450 ARB_01131 (499 aa).

The first 21 residues, 1-21, serve as a signal peptide directing secretion; sequence MLSLIVACLVLPLICYKLVRS. N-linked (GlcNAc...) asparagine glycosylation occurs at Asn23. Cys437 contacts heme.

Belongs to the cytochrome P450 family. Heme serves as cofactor.

Together with an NADPH cytochrome P450 the enzyme system catalyzes the terminal hydroxylation as the first step in the assimilation of alkanes and fatty acids. The polypeptide is Cytochrome P450 ARB_01131 (Arthroderma benhamiae (strain ATCC MYA-4681 / CBS 112371) (Trichophyton mentagrophytes)).